Reading from the N-terminus, the 490-residue chain is Xylulose kinase (490 aa).

Histidine 99, arginine 170, aspartate 280, and asparagine 281 together coordinate substrate. Residues tryptophan 355, 441–442 (GA), and asparagine 445 each bind ATP.

Belongs to the FGGY kinase family. Monomer.

The enzyme catalyses D-xylulose + ATP = D-xylulose 5-phosphate + ADP + H(+). Functionally, phosphorylates D-xylulose to produce D-xylulose 5-phosphate, a molecule that may play an important role in the regulation of glucose metabolism and lipogenesis. In Bos taurus (Bovine), this protein is Xylulose kinase (XYLB).